Here is a 117-residue protein sequence, read N- to C-terminus: Putative phosphotransferase enzyme IIB component MG129 (117 aa).

Residues 1-21 (MKWLLWLGYIFSFGLLYLWIV) traverse the membrane as a helical segment. Residues 42–117 (PFKVKDFVSA…ELKKKIEDEQ (76 aa)) enclose the PTS EIIB type-1 domain.

It is found in the membrane. The phosphoenolpyruvate-dependent sugar phosphotransferase system (PTS), a major carbohydrate active -transport system, catalyzes the phosphorylation of incoming sugar substrates concomitant with their translocation across the cell membrane. The chain is Putative phosphotransferase enzyme IIB component MG129 from Mycoplasma genitalium (strain ATCC 33530 / DSM 19775 / NCTC 10195 / G37) (Mycoplasmoides genitalium).